A 156-amino-acid chain; its full sequence is MTQSQHSQSPREALAERIVEAKTRKNLTFEQINEGTGLSVAFTTAALLGQHPLPADAARVVAAKLDLDDDAQRLLQTIPVRGSIPGGVPTDPTIYRFYEIVQVYGSTLKALIHEQFGDGIVSAINFKLDIKKVDDPEGGSRAVITLDGKYLPTKPF.

Active-site residues include Arg-96, Glu-99, and Ser-122.

This sequence belongs to the cyanase family.

The enzyme catalyses cyanate + hydrogencarbonate + 3 H(+) = NH4(+) + 2 CO2. Its function is as follows. Catalyzes the reaction of cyanate with bicarbonate to produce ammonia and carbon dioxide. The sequence is that of Cyanate hydratase from Burkholderia mallei (strain NCTC 10247).